The chain runs to 284 residues: Bifunctional protein FolD (284 aa).

Residues 164–166 (GRG), S189, and I230 each bind NADP(+).

The protein belongs to the tetrahydrofolate dehydrogenase/cyclohydrolase family. As to quaternary structure, homodimer.

It carries out the reaction (6R)-5,10-methylene-5,6,7,8-tetrahydrofolate + NADP(+) = (6R)-5,10-methenyltetrahydrofolate + NADPH. It catalyses the reaction (6R)-5,10-methenyltetrahydrofolate + H2O = (6R)-10-formyltetrahydrofolate + H(+). It participates in one-carbon metabolism; tetrahydrofolate interconversion. Its function is as follows. Catalyzes the oxidation of 5,10-methylenetetrahydrofolate to 5,10-methenyltetrahydrofolate and then the hydrolysis of 5,10-methenyltetrahydrofolate to 10-formyltetrahydrofolate. This chain is Bifunctional protein FolD, found in Desulforamulus reducens (strain ATCC BAA-1160 / DSM 100696 / MI-1) (Desulfotomaculum reducens).